Reading from the N-terminus, the 380-residue chain is NF-kappa-B inhibitor-like protein 1 (380 aa).

The interval methionine 1 to glutamate 34 is disordered. Positions alanine 13–serine 28 are enriched in polar residues. ANK repeat units follow at residues glycine 64–histidine 93 and histidine 97–lysine 133. 2 disordered regions span residues lysine 131–glutamine 167 and glutamate 185–leucine 293. Serine 150 bears the Phosphoserine mark. Residues serine 150–alanine 159 are compositionally biased toward acidic residues. Composition is skewed to basic and acidic residues over residues arginine 204–glycine 221 and arginine 236–valine 272.

Interacts with CACTIN (via N-terminal domain); the interaction occurs in a pro-inflammatory-independent manner.

It is found in the nucleus. In terms of biological role, involved in the regulation of innate immune response. Acts as negative regulator of Toll-like receptor and interferon-regulatory factor (IRF) signaling pathways. Contributes to the negative regulation of transcriptional activation of NF-kappa-B target genes in response to endogenous pro-inflammatory stimuli. This chain is NF-kappa-B inhibitor-like protein 1 (NFKBIL1), found in Sus scrofa (Pig).